Consider the following 365-residue polypeptide: GDSL lipase (365 aa).

Residues 1-27 form the signal peptide; that stretch reads MAVASRKLGALVLVAVLCLSLPTGCLS. The Nucleophile role is filled by serine 40. N-linked (GlcNAc...) asparagine glycans are attached at residues asparagine 189 and asparagine 310. Active-site charge relay system residues include aspartate 318 and histidine 321.

This sequence belongs to the 'GDSL' lipolytic enzyme family. Restricted to the pericarp during achene maturation. Expressed in the leaves of mature plants and seedlings, as well as in buds and flowers. Present in disk florets.

The protein localises to the secreted. Its subcellular location is the extracellular space. It catalyses the reaction (Z,S)-pyrethrolone + (1R,3R)-chrysanthemoyl-CoA = pyrethrin I + CoA. The catalysed reaction is (Z,S)-pyrethrolone + (1R,3R)-pyrethroyl-CoA = pyrethrin II + CoA. The enzyme catalyses (Z,S)-jasmololone + (1R,3R)-chrysanthemoyl-CoA = jasmolin I + CoA. It carries out the reaction (Z,S)-cinerolone + (1R,3R)-chrysanthemoyl-CoA = cinerin I + CoA. It catalyses the reaction (Z,S)-jasmololone + (1R,3R)-pyrethroyl-CoA = jasmolin II + CoA. The catalysed reaction is (Z,S)-cinerolone + (1R,3R)-pyrethroyl-CoA = cinerin II + CoA. It functions in the pathway isoprenoid biosynthesis. In terms of biological role, component of the monoterpenoid pyrethrins biosynthesis; pyrethrins are widely used plant-derived pesticide. Acyltransferase that catalyzes the esterification of terpene acids and lipid alcohol substrates into pyrethrins; mediates the transfer of a chrysanthemoyl moiety from the coenzyme A (CoA) thio-ester chrysanthemoyl CoA to pyrethrolone, and, to a lower extent, to jasmololone and cinerolone thus producing pyrethrins (e.g. pyrethrin type I). Can also use pyrethroyl CoA as substrate. Also has esterase activity, being able to cleave the ester bond of pyrethrin I, p-nitrophenyl butanoate and p-nitrophenyl octanoate to produce pyrethrolone and p-nitrophenol, respectively. The polypeptide is GDSL lipase (Tanacetum cinerariifolium (Dalmatian daisy)).